We begin with the raw amino-acid sequence, 122 residues long: MISGIRVNDNCVTEFNNMKIRKTCGWIIFVIQNCEIIIHSKGASTTLTELVQSIDKNNEIQCAYVVFDAVSKIHFFMYARESSNSRDRMTYASSKQAILKKIEGVNVLTSVIESAQDVADLK.

Residues 4–122 form the ADF-H domain; sequence GIRVNDNCVT…ESAQDVADLK (119 aa).

Belongs to the actin-binding proteins ADF family. As to quaternary structure, interacts with monomeric actin, does not bind to actin polymers.

It localises to the cytoplasm. The protein resides in the cytoskeleton. Its function is as follows. Not involved in actin polymerisation, instead functions to stimulate nucleotide exchange on monomeric actin and influence turnover of the small amount of cytosolic actin microfilaments. Essential for erythrocytic schizogony. This Plasmodium falciparum (isolate 3D7) protein is Cofilin/actin-depolymerizing factor homolog 1.